Here is a 517-residue protein sequence, read N- to C-terminus: ATP synthase subunit alpha (517 aa).

174 to 181 is a binding site for ATP; it reads GDRQTGKT.

Belongs to the ATPase alpha/beta chains family. In terms of assembly, F-type ATPases have 2 components, CF(1) - the catalytic core - and CF(0) - the membrane proton channel. CF(1) has five subunits: alpha(3), beta(3), gamma(1), delta(1), epsilon(1). CF(0) has three main subunits: a(1), b(2) and c(9-12). The alpha and beta chains form an alternating ring which encloses part of the gamma chain. CF(1) is attached to CF(0) by a central stalk formed by the gamma and epsilon chains, while a peripheral stalk is formed by the delta and b chains.

The protein localises to the cell inner membrane. The catalysed reaction is ATP + H2O + 4 H(+)(in) = ADP + phosphate + 5 H(+)(out). Functionally, produces ATP from ADP in the presence of a proton gradient across the membrane. The alpha chain is a regulatory subunit. The chain is ATP synthase subunit alpha from Polaromonas sp. (strain JS666 / ATCC BAA-500).